Consider the following 494-residue polypeptide: MSRFDGRAADPGSYRDRRSEGAFGGGTRAFAPTSKADSAAAAADLDGLPRFEKNFYVESPSVAGMTEEEVEAYRRRREITVEGRDVPKPVREFRDVGFPEYVLQEITKAGFVEPTPIQSQGWPMALRGRDLIGIAETGSGKTLAYLLPAIVHVNAQPILAPGDGPIVLVLAPTRELAVQIQQEATKFGASSKIKSTCIYGGVPKGPQVRDLQKGVEIVIATPGRLIDMIESHHTNLRRVTYLVLDEADRMLDMGFEPQIKKIVSQIRPDRQTLYWSATWPKEVEQLARNFLFDPYKVIIGSEELKANHAISQHVEILSESQKYNKLVNLLEDIMDGSRILIFMDTKKGCDQITRQLRMDGWPALSIHGDKSQAERDWVLSEFKSGKSPIMTATDVAARGLDVKDVKYVINYDFPGSLEDYVHRIGRTGRAGAKGTAYTFFTAANARFAKDLINILEEAGQKVSPELANMGRGAPPPSSGHRDRYRGYGGGRSWS.

Residues 1–20 (MSRFDGRAADPGSYRDRRSE) are compositionally biased toward basic and acidic residues. Residues 1-39 (MSRFDGRAADPGSYRDRRSEGAFGGGTRAFAPTSKADSA) are disordered. Residues 29 to 39 (AFAPTSKADSA) are compositionally biased toward low complexity. The Q motif signature appears at 91–119 (REFRDVGFPEYVLQEITKAGFVEPTPIQS). Positions 122-297 (WPMALRGRDL…RNFLFDPYKV (176 aa)) constitute a Helicase ATP-binding domain. Residue 135-142 (AETGSGKT) participates in ATP binding. A DEAD box motif is present at residues 245 to 248 (DEAD). A Helicase C-terminal domain is found at 325–470 (KLVNLLEDIM…KVSPELANMG (146 aa)). A disordered region spans residues 465–494 (ELANMGRGAPPPSSGHRDRYRGYGGGRSWS).

It belongs to the DEAD box helicase family. DDX5/DBP2 subfamily.

The protein localises to the nucleus. The enzyme catalyses ATP + H2O = ADP + phosphate + H(+). In terms of biological role, ATP-dependent RNA helicase involved nonsense-mediated mRNA decay and ribosome biogenesis through rRNA processing. The sequence is that of DEAD-box ATP-dependent RNA helicase 20 from Oryza sativa subsp. japonica (Rice).